The primary structure comprises 21 residues: Major outer membrane protein (21 aa).

Disulfide bond interactions within and between MOMP molecules and other components form high molecular-weight oligomers.

The protein localises to the cell outer membrane. Functionally, structural rigidity of the outer membrane of elementary bodies and porin forming, permitting diffusion of solutes through the intracellular reticulate body membrane. This Actinobacillus suis protein is Major outer membrane protein.